Consider the following 601-residue polypeptide: Elongation factor 4 (601 aa).

A tr-type G domain is found at 7–189; sequence SLIRNFSIIA…ALVTRLPPPV (183 aa). Residues 19–24 and 136–139 each bind GTP; these read DHGKST and NKVD.

This sequence belongs to the TRAFAC class translation factor GTPase superfamily. Classic translation factor GTPase family. LepA subfamily.

It localises to the cell inner membrane. It carries out the reaction GTP + H2O = GDP + phosphate + H(+). Its function is as follows. Required for accurate and efficient protein synthesis under certain stress conditions. May act as a fidelity factor of the translation reaction, by catalyzing a one-codon backward translocation of tRNAs on improperly translocated ribosomes. Back-translocation proceeds from a post-translocation (POST) complex to a pre-translocation (PRE) complex, thus giving elongation factor G a second chance to translocate the tRNAs correctly. Binds to ribosomes in a GTP-dependent manner. The sequence is that of Elongation factor 4 from Gluconacetobacter diazotrophicus (strain ATCC 49037 / DSM 5601 / CCUG 37298 / CIP 103539 / LMG 7603 / PAl5).